A 690-amino-acid chain; its full sequence is DNA ligase (690 aa).

NAD(+) contacts are provided by residues 43–47 (DAEYD), 92–93 (SI), and E129. The active-site N6-AMP-lysine intermediate is K131. NAD(+)-binding residues include R152, E188, K309, and K333. Zn(2+) is bound by residues C427, C430, C445, and C451. The region spanning 610–690 (VTPTPLSGKT…GLKELLDGHS (81 aa)) is the BRCT domain.

Belongs to the NAD-dependent DNA ligase family. LigA subfamily. Mg(2+) is required as a cofactor. Requires Mn(2+) as cofactor.

It carries out the reaction NAD(+) + (deoxyribonucleotide)n-3'-hydroxyl + 5'-phospho-(deoxyribonucleotide)m = (deoxyribonucleotide)n+m + AMP + beta-nicotinamide D-nucleotide.. Functionally, DNA ligase that catalyzes the formation of phosphodiester linkages between 5'-phosphoryl and 3'-hydroxyl groups in double-stranded DNA using NAD as a coenzyme and as the energy source for the reaction. It is essential for DNA replication and repair of damaged DNA. The chain is DNA ligase from Albidiferax ferrireducens (strain ATCC BAA-621 / DSM 15236 / T118) (Rhodoferax ferrireducens).